Here is a 348-residue protein sequence, read N- to C-terminus: Glycerol-1-phosphate dehydrogenase [NAD(P)+] (348 aa).

NAD(+) contacts are provided by residues 94-98 and 116-119; these read GKPID and TAAS. Aspartate 121 is a binding site for substrate. Serine 125 is an NAD(+) binding site. Aspartate 168 is a binding site for substrate. Aspartate 168 and histidine 248 together coordinate Zn(2+). Residue histidine 252 coordinates substrate. Zn(2+) is bound at residue histidine 264.

The protein belongs to the glycerol-1-phosphate dehydrogenase family. It depends on Zn(2+) as a cofactor.

The protein resides in the cytoplasm. It catalyses the reaction sn-glycerol 1-phosphate + NAD(+) = dihydroxyacetone phosphate + NADH + H(+). The enzyme catalyses sn-glycerol 1-phosphate + NADP(+) = dihydroxyacetone phosphate + NADPH + H(+). It functions in the pathway membrane lipid metabolism; glycerophospholipid metabolism. In terms of biological role, catalyzes the NAD(P)H-dependent reduction of dihydroxyacetonephosphate (DHAP or glycerone phosphate) to glycerol 1-phosphate (G1P). The G1P thus generated is used as the glycerophosphate backbone of phospholipids in the cellular membranes of Archaea. The protein is Glycerol-1-phosphate dehydrogenase [NAD(P)+] of Haloquadratum walsbyi (strain DSM 16790 / HBSQ001).